The chain runs to 276 residues: Large ribosomal subunit protein uL2 (276 aa).

Residues 203–276 form a disordered region; it reads NVSSGKAGRT…SDKFIVKRRK (74 aa). The span at 210-220 shows a compositional bias: basic residues; the sequence is GRTRWLGRRPQ. Residues 265-276 show a composition bias toward basic and acidic residues; the sequence is KPSDKFIVKRRK.

This sequence belongs to the universal ribosomal protein uL2 family. In terms of assembly, part of the 50S ribosomal subunit. Forms a bridge to the 30S subunit in the 70S ribosome.

In terms of biological role, one of the primary rRNA binding proteins. Required for association of the 30S and 50S subunits to form the 70S ribosome, for tRNA binding and peptide bond formation. It has been suggested to have peptidyltransferase activity; this is somewhat controversial. Makes several contacts with the 16S rRNA in the 70S ribosome. In Coprothermobacter proteolyticus (strain ATCC 35245 / DSM 5265 / OCM 4 / BT), this protein is Large ribosomal subunit protein uL2.